Here is a 315-residue protein sequence, read N- to C-terminus: MSKIYQDNSLTIGNTPLVRLNRIGNGNILVKIESRNPSFSVKCRIGANMIWHAEKNNNINKNVKLIEATSGNTGIALAYVAASRNYRLTLTMPETMSIERKKILKSLGAELILTDGRYGMKGAISKANDIISRNPSKYFLLKQFENPANPEIHQITTGPEIWNDTNGNLDILISAVGTGGTITGITRYIKKIKRKKNLISIAVEPSESPVITQFLAGKAIEPGPHKIQGIGPGFIPKNLDLTIIDQVITVSSEEAILTAKELMKKEGILAGISSGAALYAAIKIQQQKKFSDKKIVVILPSSGERYLSTELFSEL.

Positions 8 and 35 each coordinate hydrogen sulfide. Lysine 42 is modified (N6-(pyridoxal phosphate)lysine). Pyridoxal 5'-phosphate is bound by residues asparagine 72 and 177 to 181 (GTGGT). Hydrogen sulfide is bound at residue leucine 269. Serine 273 provides a ligand contact to pyridoxal 5'-phosphate.

Belongs to the cysteine synthase/cystathionine beta-synthase family. In terms of assembly, homodimer. Pyridoxal 5'-phosphate serves as cofactor.

The enzyme catalyses O-acetyl-L-serine + hydrogen sulfide = L-cysteine + acetate. It functions in the pathway amino-acid biosynthesis; L-cysteine biosynthesis; L-cysteine from L-serine: step 2/2. The polypeptide is Cysteine synthase (cysK) (Buchnera aphidicola subsp. Acyrthosiphon pisum (strain APS) (Acyrthosiphon pisum symbiotic bacterium)).